The chain runs to 210 residues: Thiamine-phosphate synthase (210 aa).

4-amino-2-methyl-5-(diphosphooxymethyl)pyrimidine-binding positions include 39–43 and N71; that span reads QLREK. D72 and D91 together coordinate Mg(2+). Position 110 (S110) interacts with 4-amino-2-methyl-5-(diphosphooxymethyl)pyrimidine. 134-136 serves as a coordination point for 2-[(2R,5Z)-2-carboxy-4-methylthiazol-5(2H)-ylidene]ethyl phosphate; it reads TPT. K137 is a 4-amino-2-methyl-5-(diphosphooxymethyl)pyrimidine binding site. G163 provides a ligand contact to 2-[(2R,5Z)-2-carboxy-4-methylthiazol-5(2H)-ylidene]ethyl phosphate.

It belongs to the thiamine-phosphate synthase family. Requires Mg(2+) as cofactor.

The enzyme catalyses 2-[(2R,5Z)-2-carboxy-4-methylthiazol-5(2H)-ylidene]ethyl phosphate + 4-amino-2-methyl-5-(diphosphooxymethyl)pyrimidine + 2 H(+) = thiamine phosphate + CO2 + diphosphate. The catalysed reaction is 2-(2-carboxy-4-methylthiazol-5-yl)ethyl phosphate + 4-amino-2-methyl-5-(diphosphooxymethyl)pyrimidine + 2 H(+) = thiamine phosphate + CO2 + diphosphate. It catalyses the reaction 4-methyl-5-(2-phosphooxyethyl)-thiazole + 4-amino-2-methyl-5-(diphosphooxymethyl)pyrimidine + H(+) = thiamine phosphate + diphosphate. It functions in the pathway cofactor biosynthesis; thiamine diphosphate biosynthesis; thiamine phosphate from 4-amino-2-methyl-5-diphosphomethylpyrimidine and 4-methyl-5-(2-phosphoethyl)-thiazole: step 1/1. In terms of biological role, condenses 4-methyl-5-(beta-hydroxyethyl)thiazole monophosphate (THZ-P) and 2-methyl-4-amino-5-hydroxymethyl pyrimidine pyrophosphate (HMP-PP) to form thiamine monophosphate (TMP). The chain is Thiamine-phosphate synthase from Campylobacter jejuni subsp. jejuni serotype O:6 (strain 81116 / NCTC 11828).